The primary structure comprises 113 residues: Cytochrome c (113 aa).

The residue at position 1 (Ala-1) is an N-acetylalanine. The heme c site is built by Cys-22, Cys-25, and His-26. At Lys-80 the chain carries N6,N6,N6-trimethyllysine. Met-88 contributes to the heme c binding site. Lys-94 carries the N6,N6,N6-trimethyllysine modification.

It belongs to the cytochrome c family. Post-translationally, binds 1 heme c group covalently per subunit.

The protein resides in the mitochondrion intermembrane space. In terms of biological role, electron carrier protein. The oxidized form of the cytochrome c heme group can accept an electron from the heme group of the cytochrome c1 subunit of cytochrome reductase. Cytochrome c then transfers this electron to the cytochrome oxidase complex, the final protein carrier in the mitochondrial electron-transport chain. This is Cytochrome c from Ginkgo biloba (Ginkgo).